A 371-amino-acid chain; its full sequence is Tetraacyldisaccharide 4'-kinase (371 aa).

48 to 55 (SAGGTGKT) contributes to the ATP binding site.

Belongs to the LpxK family.

The enzyme catalyses a lipid A disaccharide + ATP = a lipid IVA + ADP + H(+). Its pathway is glycolipid biosynthesis; lipid IV(A) biosynthesis; lipid IV(A) from (3R)-3-hydroxytetradecanoyl-[acyl-carrier-protein] and UDP-N-acetyl-alpha-D-glucosamine: step 6/6. Transfers the gamma-phosphate of ATP to the 4'-position of a tetraacyldisaccharide 1-phosphate intermediate (termed DS-1-P) to form tetraacyldisaccharide 1,4'-bis-phosphate (lipid IVA). The chain is Tetraacyldisaccharide 4'-kinase from Chlorobium chlorochromatii (strain CaD3).